The sequence spans 346 residues: UDP-3-O-acylglucosamine N-acyltransferase (346 aa).

Histidine 253 (proton acceptor) is an active-site residue.

Belongs to the transferase hexapeptide repeat family. LpxD subfamily. As to quaternary structure, homotrimer.

The enzyme catalyses a UDP-3-O-[(3R)-3-hydroxyacyl]-alpha-D-glucosamine + a (3R)-hydroxyacyl-[ACP] = a UDP-2-N,3-O-bis[(3R)-3-hydroxyacyl]-alpha-D-glucosamine + holo-[ACP] + H(+). The protein operates within bacterial outer membrane biogenesis; LPS lipid A biosynthesis. Catalyzes the N-acylation of UDP-3-O-acylglucosamine using 3-hydroxyacyl-ACP as the acyl donor. Is involved in the biosynthesis of lipid A, a phosphorylated glycolipid that anchors the lipopolysaccharide to the outer membrane of the cell. The chain is UDP-3-O-acylglucosamine N-acyltransferase from Rickettsia peacockii (strain Rustic).